A 336-amino-acid chain; its full sequence is Phospho-N-acetylmuramoyl-pentapeptide-transferase (336 aa).

A run of 10 helical transmembrane segments spans residues 1 to 21 (MLPL…SLFL), 56 to 76 (IPTA…LLLF), 78 to 98 (IQLW…ALGW), 124 to 144 (CLAA…FLSF), 148 to 168 (FLGI…FAIA), 184 to 204 (GLDG…LVVA), 210 to 230 (PWAF…LGFL), 239 to 259 (VFMG…CAVL), 264 to 284 (FLLL…IVQV), and 314 to 334 (VVRN…IAVF).

This sequence belongs to the glycosyltransferase 4 family. MraY subfamily. It depends on Mg(2+) as a cofactor.

It is found in the cell inner membrane. It catalyses the reaction UDP-N-acetyl-alpha-D-muramoyl-L-alanyl-gamma-D-glutamyl-meso-2,6-diaminopimeloyl-D-alanyl-D-alanine + di-trans,octa-cis-undecaprenyl phosphate = di-trans,octa-cis-undecaprenyl diphospho-N-acetyl-alpha-D-muramoyl-L-alanyl-D-glutamyl-meso-2,6-diaminopimeloyl-D-alanyl-D-alanine + UMP. It functions in the pathway cell wall biogenesis; peptidoglycan biosynthesis. Its function is as follows. Catalyzes the initial step of the lipid cycle reactions in the biosynthesis of the cell wall peptidoglycan: transfers peptidoglycan precursor phospho-MurNAc-pentapeptide from UDP-MurNAc-pentapeptide onto the lipid carrier undecaprenyl phosphate, yielding undecaprenyl-pyrophosphoryl-MurNAc-pentapeptide, known as lipid I. The chain is Phospho-N-acetylmuramoyl-pentapeptide-transferase from Chlamydia trachomatis serovar L2b (strain UCH-1/proctitis).